Here is a 120-residue protein sequence, read N- to C-terminus: uncharacterized protein (120 aa).

A helical membrane pass occupies residues 22–44 (ITVASCIGAAQGALFSIASALLL). N-linked (GlcNAc...) asparagine glycosylation occurs at N114.

Its subcellular location is the membrane. This is an uncharacterized protein from Saccharomyces cerevisiae (strain ATCC 204508 / S288c) (Baker's yeast).